The sequence spans 242 residues: 7-cyano-7-deazaguanine synthase (242 aa).

Residues 1 to 22 (MNSSSNEKNKDLNRKNFSSKTD) form a disordered region. Residue 32-42 (LSGGLDSTTCL) participates in ATP binding. 4 residues coordinate Zn(2+): C212, C221, C224, and C227.

The protein belongs to the QueC family. It depends on Zn(2+) as a cofactor.

The enzyme catalyses 7-carboxy-7-deazaguanine + NH4(+) + ATP = 7-cyano-7-deazaguanine + ADP + phosphate + H2O + H(+). It participates in purine metabolism; 7-cyano-7-deazaguanine biosynthesis. In terms of biological role, catalyzes the ATP-dependent conversion of 7-carboxy-7-deazaguanine (CDG) to 7-cyano-7-deazaguanine (preQ(0)). The chain is 7-cyano-7-deazaguanine synthase from Leptospira interrogans serogroup Icterohaemorrhagiae serovar copenhageni (strain Fiocruz L1-130).